The sequence spans 492 residues: 3-octaprenyl-4-hydroxybenzoate carboxy-lyase (492 aa).

A Mn(2+)-binding site is contributed by asparagine 175. Prenylated FMN contacts are provided by residues 178–180 (IYR), 192–194 (RWL), and 197–198 (RG). Residue glutamate 241 participates in Mn(2+) binding. The active-site Proton donor is aspartate 290.

This sequence belongs to the UbiD family. As to quaternary structure, homohexamer. Prenylated FMN serves as cofactor. The cofactor is Mn(2+).

It localises to the cell membrane. It catalyses the reaction a 4-hydroxy-3-(all-trans-polyprenyl)benzoate + H(+) = a 2-(all-trans-polyprenyl)phenol + CO2. Its pathway is cofactor biosynthesis; ubiquinone biosynthesis. Functionally, catalyzes the decarboxylation of 3-octaprenyl-4-hydroxy benzoate to 2-octaprenylphenol, an intermediate step in ubiquinone biosynthesis. This chain is 3-octaprenyl-4-hydroxybenzoate carboxy-lyase, found in Salmonella choleraesuis (strain SC-B67).